A 388-amino-acid polypeptide reads, in one-letter code: NADH-quinone oxidoreductase subunit D 2 (388 aa).

The protein belongs to the complex I 49 kDa subunit family. As to quaternary structure, NDH-1 is composed of 14 different subunits. Subunits NuoB, C, D, E, F, and G constitute the peripheral sector of the complex.

The protein localises to the cell membrane. The catalysed reaction is a quinone + NADH + 5 H(+)(in) = a quinol + NAD(+) + 4 H(+)(out). Functionally, NDH-1 shuttles electrons from NADH, via FMN and iron-sulfur (Fe-S) centers, to quinones in the respiratory chain. The immediate electron acceptor for the enzyme in this species is believed to be a menaquinone. Couples the redox reaction to proton translocation (for every two electrons transferred, four hydrogen ions are translocated across the cytoplasmic membrane), and thus conserves the redox energy in a proton gradient. The polypeptide is NADH-quinone oxidoreductase subunit D 2 (Salinispora tropica (strain ATCC BAA-916 / DSM 44818 / JCM 13857 / NBRC 105044 / CNB-440)).